Consider the following 104-residue polypeptide: MRGQQTPPQQPTRVRTPRENENEVLGVIEQMLGASRVRVRCMDGKLRMGRIPGKLKRKIWVREDDVVIVTPWEVQSDEKCDVIWRYTKGQVDWLNRKGYLDFMR.

Residues 1 to 14 (MRGQQTPPQQPTRV) show a composition bias toward low complexity. The interval 1–20 (MRGQQTPPQQPTRVRTPREN) is disordered. In terms of domain architecture, S1-like spans 12-87 (TRVRTPRENE…EKCDVIWRYT (76 aa)).

This sequence belongs to the eIF-1A family.

Seems to be required for maximal rate of protein biosynthesis. Enhances ribosome dissociation into subunits and stabilizes the binding of the initiator Met-tRNA(I) to 40 S ribosomal subunits. This chain is Translation initiation factor 1A, found in Methanococcus maripaludis (strain DSM 14266 / JCM 13030 / NBRC 101832 / S2 / LL).